The following is a 712-amino-acid chain: Methionine--tRNA ligase (712 aa).

A 'HIGH' region motif is present at residues 20–30; the sequence is PYANGKAHIGH. Zn(2+) is bound by residues cysteine 151, cysteine 154, cysteine 163, and cysteine 167. The short motif at 334–338 is the 'KMSKS' region element; sequence KFSKT. Residue lysine 337 participates in ATP binding. The interval 559 to 585 is disordered; sequence ANAKKSAAKGGEKEPSKSEGMGPSEEA. Residues 610–712 enclose the tRNA-binding domain; it reads DFAKLDIRVG…KEIKPGSRIR (103 aa).

The protein belongs to the class-I aminoacyl-tRNA synthetase family. MetG type 1 subfamily. In terms of assembly, homodimer. The cofactor is Zn(2+).

The protein localises to the cytoplasm. It carries out the reaction tRNA(Met) + L-methionine + ATP = L-methionyl-tRNA(Met) + AMP + diphosphate. In terms of biological role, is required not only for elongation of protein synthesis but also for the initiation of all mRNA translation through initiator tRNA(fMet) aminoacylation. This is Methionine--tRNA ligase from Methanosarcina acetivorans (strain ATCC 35395 / DSM 2834 / JCM 12185 / C2A).